A 206-amino-acid chain; its full sequence is Large ribosomal subunit protein uL13 (206 aa).

The protein belongs to the universal ribosomal protein uL13 family.

This chain is Large ribosomal subunit protein uL13 (RPL13A), found in Picea mariana (Black spruce).